A 557-amino-acid chain; its full sequence is Formate--tetrahydrofolate ligase (557 aa).

65–72 is an ATP binding site; that stretch reads TPAGEGKT.

Belongs to the formate--tetrahydrofolate ligase family.

The enzyme catalyses (6S)-5,6,7,8-tetrahydrofolate + formate + ATP = (6R)-10-formyltetrahydrofolate + ADP + phosphate. It participates in one-carbon metabolism; tetrahydrofolate interconversion. The sequence is that of Formate--tetrahydrofolate ligase from Methylorubrum extorquens (strain PA1) (Methylobacterium extorquens).